Reading from the N-terminus, the 193-residue chain is MRKGLTLVEVLVTLVIMGIAFAALLTSQLANLRASAQARFATDAKAAAVQVLERRSAEVLKSEIVPALSPYKDAPLDPDNPSGNWRSFYFVDYYFSCPTRVAPSPKQRGGSVANLRPGLTCSGTETIFGIPVAWDIRGENGILGEGVVTVVVTATHPRGPKVTLGRRVTCYDVYPSPTQDQPAPCPPPGGGRP.

Positions 1–4 (MRKG) are cleaved as a propeptide — leader sequence. At leucine 5 the chain carries N-methylleucine. A helical transmembrane segment spans residues 5–25 (LTLVEVLVTLVIMGIAFAALL).

It localises to the cell inner membrane. The protein localises to the cell outer membrane. The protein resides in the periplasm. In terms of biological role, plays an essential role in natural DNA transformation but is not required for pilus biogenesis. This chain is Pilin-like protein PilA2 (pilA2), found in Thermus thermophilus (strain ATCC BAA-163 / DSM 7039 / HB27).